The primary structure comprises 137 residues: Small ribosomal subunit protein uS12 (137 aa).

Asp89 carries the 3-methylthioaspartic acid modification. Residues 105-137 (AGVAGRTQRRSKYGAKRPKAGQAAAPAKGKGKK) form a disordered region. Over residues 111–123 (TQRRSKYGAKRPK) the composition is skewed to basic residues. A compositionally biased stretch (low complexity) spans 124–137 (AGQAAAPAKGKGKK).

This sequence belongs to the universal ribosomal protein uS12 family. In terms of assembly, part of the 30S ribosomal subunit. Contacts proteins S8 and S17. May interact with IF1 in the 30S initiation complex.

In terms of biological role, with S4 and S5 plays an important role in translational accuracy. Functionally, interacts with and stabilizes bases of the 16S rRNA that are involved in tRNA selection in the A site and with the mRNA backbone. Located at the interface of the 30S and 50S subunits, it traverses the body of the 30S subunit contacting proteins on the other side and probably holding the rRNA structure together. The combined cluster of proteins S8, S12 and S17 appears to hold together the shoulder and platform of the 30S subunit. The chain is Small ribosomal subunit protein uS12 from Phocaeicola vulgatus (strain ATCC 8482 / DSM 1447 / JCM 5826 / CCUG 4940 / NBRC 14291 / NCTC 11154) (Bacteroides vulgatus).